The primary structure comprises 519 residues: Ribonuclease Y (519 aa).

The helical transmembrane segment at 3-23 threads the bilayer; sequence PLAILISILLSLFCLVVGYYV. The 64-residue stretch at 209 to 272 folds into the KH domain; it reads TVSVVNLPND…ETARIALDKL (64 aa). The HD domain occupies 335-428; that stretch reads VLKHSMEVAF…VAAADALSAA (94 aa).

It belongs to the RNase Y family.

Its subcellular location is the cell membrane. Endoribonuclease that initiates mRNA decay. The protein is Ribonuclease Y of Bacillus licheniformis (strain ATCC 14580 / DSM 13 / JCM 2505 / CCUG 7422 / NBRC 12200 / NCIMB 9375 / NCTC 10341 / NRRL NRS-1264 / Gibson 46).